A 254-amino-acid polypeptide reads, in one-letter code: Alcohol dehydrogenase 2 (254 aa).

10 to 33 (FVAGLGGIGLDTSREIVKSGPKNL) lines the NAD(+) pocket. A substrate-binding site is contributed by Ser138. The active-site Proton acceptor is the Tyr151.

It belongs to the short-chain dehydrogenases/reductases (SDR) family. Homodimer.

It carries out the reaction a primary alcohol + NAD(+) = an aldehyde + NADH + H(+). The catalysed reaction is a secondary alcohol + NAD(+) = a ketone + NADH + H(+). The sequence is that of Alcohol dehydrogenase 2 (Adh2) from Drosophila hydei (Fruit fly).